A 216-amino-acid polypeptide reads, in one-letter code: Somatotropin (216 aa).

The signal sequence occupies residues 1–26 (MAAGPRTSMLLAFALLCLPWTQEVGA). Position 45 (H45) interacts with Zn(2+). C78 and C189 are oxidised to a cystine. Phosphoserine is present on S131. Position 198 (E198) interacts with Zn(2+). A disulfide bridge connects residues C206 and C214.

It belongs to the somatotropin/prolactin family.

It localises to the secreted. Plays an important role in growth control. Its major role in stimulating body growth is to stimulate the liver and other tissues to secrete IGF1. It stimulates both the differentiation and proliferation of myoblasts. It also stimulates amino acid uptake and protein synthesis in muscle and other tissues. This chain is Somatotropin (GH1), found in Balaenoptera physalus (Fin whale).